The primary structure comprises 415 residues: Ankyrin repeat domain-containing protein 10 (415 aa).

ANK repeat units follow at residues S20–L49, Y56–V85, Y90–K119, and E123–L152. Residues T303–G325 are compositionally biased toward polar residues. A disordered region spans residues T303 to E330.

This chain is Ankyrin repeat domain-containing protein 10 (Ankrd10), found in Mus musculus (Mouse).